Reading from the N-terminus, the 191-residue chain is Holliday junction branch migration complex subunit RuvA (191 aa).

A domain I region spans residues 1–64; that stretch reads MIGTLSGIIE…DNVPQLYGFT (64 aa). The interval 65–145 is domain II; that stretch reads DTEEQNCLKM…FNIMDKRGPS (81 aa). Residues 146–149 form a flexible linker region; sequence VEDS. The domain III stretch occupies residues 149 to 191; that stretch reads SDALSALLSLGYEKTRVLNALEKVGVSHNLSDTVRFALKELSK.

It belongs to the RuvA family. Homotetramer. Forms an RuvA(8)-RuvB(12)-Holliday junction (HJ) complex. HJ DNA is sandwiched between 2 RuvA tetramers; dsDNA enters through RuvA and exits via RuvB. An RuvB hexamer assembles on each DNA strand where it exits the tetramer. Each RuvB hexamer is contacted by two RuvA subunits (via domain III) on 2 adjacent RuvB subunits; this complex drives branch migration. In the full resolvosome a probable DNA-RuvA(4)-RuvB(12)-RuvC(2) complex forms which resolves the HJ.

It localises to the cytoplasm. The RuvA-RuvB-RuvC complex processes Holliday junction (HJ) DNA during genetic recombination and DNA repair, while the RuvA-RuvB complex plays an important role in the rescue of blocked DNA replication forks via replication fork reversal (RFR). RuvA specifically binds to HJ cruciform DNA, conferring on it an open structure. The RuvB hexamer acts as an ATP-dependent pump, pulling dsDNA into and through the RuvAB complex. HJ branch migration allows RuvC to scan DNA until it finds its consensus sequence, where it cleaves and resolves the cruciform DNA. The protein is Holliday junction branch migration complex subunit RuvA of Anaplasma phagocytophilum (strain HZ).